The following is a 590-amino-acid chain: Protein phosphatase PP2A regulatory subunit A (590 aa).

HEAT repeat units lie at residues 12–50, 89–127, 206–244, 246–284, 285–323, 324–362, 363–401, 402–440, 480–518, 519–551, and 562–590; these read PIAV…TRDE, LLSP…LEQY, FIPL…EIRH, LLQP…IKDE, LIKP…VLEE, IIPV…TTEY, LLPM…LSQS, LLPA…FNEK, IIPK…IEKQ, ILPT…VLAA, and IIPL…QTND.

The protein belongs to the phosphatase 2A regulatory subunit A family. In terms of assembly, PP2A exists in several trimeric forms, all of which consist of a core composed of a catalytic subunit associated with a 65 kDa (PR65) (Subunit A) and a 55 kDa (PR55) (Subunit B) regulatory subunit.

Functionally, phosphatase 2A affects a variety of biological processes in the cell such as transcription, cell cycle progression and cellular morphogenesis, and provides an initial identification of critical substrates for this phosphatase. The regulatory subunit may direct the catalytic subunit to distinct, albeit overlapping, subsets of substrates. The protein is Protein phosphatase PP2A regulatory subunit A (paa1) of Schizosaccharomyces pombe (strain 972 / ATCC 24843) (Fission yeast).